A 229-amino-acid polypeptide reads, in one-letter code: Cytochrome c oxidase subunit 2 (229 aa).

At Met1–His26 the chain is on the mitochondrial intermembrane side. A helical membrane pass occupies residues Ala27–Asn48. Residues Ser49–Glu62 are Mitochondrial matrix-facing. The helical transmembrane segment at Met63–Arg82 threads the bilayer. The Mitochondrial intermembrane portion of the chain corresponds to Leu83–Ser229. 6 residues coordinate Cu cation: His161, Cys196, Glu198, Cys200, His204, and Met207. Mg(2+) is bound at residue Glu198.

The protein belongs to the cytochrome c oxidase subunit 2 family. Component of the cytochrome c oxidase (complex IV, CIV), a multisubunit enzyme composed of a catalytic core of 3 subunits and several supernumerary subunits. The complex exists as a monomer or a dimer and forms supercomplexes (SCs) in the inner mitochondrial membrane with ubiquinol-cytochrome c oxidoreductase (cytochrome b-c1 complex, complex III, CIII). Requires Cu cation as cofactor.

It localises to the mitochondrion inner membrane. It carries out the reaction 4 Fe(II)-[cytochrome c] + O2 + 8 H(+)(in) = 4 Fe(III)-[cytochrome c] + 2 H2O + 4 H(+)(out). Component of the cytochrome c oxidase, the last enzyme in the mitochondrial electron transport chain which drives oxidative phosphorylation. The respiratory chain contains 3 multisubunit complexes succinate dehydrogenase (complex II, CII), ubiquinol-cytochrome c oxidoreductase (cytochrome b-c1 complex, complex III, CIII) and cytochrome c oxidase (complex IV, CIV), that cooperate to transfer electrons derived from NADH and succinate to molecular oxygen, creating an electrochemical gradient over the inner membrane that drives transmembrane transport and the ATP synthase. Cytochrome c oxidase is the component of the respiratory chain that catalyzes the reduction of oxygen to water. Electrons originating from reduced cytochrome c in the intermembrane space (IMS) are transferred via the dinuclear copper A center (CU(A)) of subunit 2 and heme A of subunit 1 to the active site in subunit 1, a binuclear center (BNC) formed by heme A3 and copper B (CU(B)). The BNC reduces molecular oxygen to 2 water molecules using 4 electrons from cytochrome c in the IMS and 4 protons from the mitochondrial matrix. In Drosophila narragansett (Fruit fly), this protein is Cytochrome c oxidase subunit 2 (mt:CoII).